A 296-amino-acid polypeptide reads, in one-letter code: Tubulin polyglutamylase complex subunit 2 (296 aa).

The interval 257–296 (KILIPKKKGPVQPVSGQKGPGPLAPPTSKPSAGCGNPVRK) is disordered.

As to quaternary structure, part of the neuronal tubulin polyglutamylase complex which contains TPGS1, TPGS2, TTLL1, LRRC49 and NICN1. Interacts with CSTPP1 and LRRC49.

The protein localises to the cytoplasm. It localises to the cytoskeleton. The protein resides in the microtubule organizing center. Its subcellular location is the centrosome. It is found in the centriolar satellite. Its function is as follows. Subunit of the tubulin polyglutamylase complex (TPGC). The complex mediates cilia and flagella polyglutamylation which is essential for their biogenesis and motility. This chain is Tubulin polyglutamylase complex subunit 2 (Tpgs2), found in Rattus norvegicus (Rat).